A 140-amino-acid chain; its full sequence is Cytochrome c-type biogenesis protein CcmE (140 aa).

The Cytoplasmic portion of the chain corresponds to 1–7 (MKRKHKR). A helical; Signal-anchor for type II membrane protein membrane pass occupies residues 8–28 (LLFVLASFCAAGCALLFILSE). At 29 to 140 (LRESVSFFYT…TAPKSSPEPK (112 aa)) the chain is on the periplasmic side. Positions 121 and 125 each coordinate heme.

This sequence belongs to the CcmE/CycJ family.

The protein localises to the cell inner membrane. Functionally, heme chaperone required for the biogenesis of c-type cytochromes. Transiently binds heme delivered by CcmC and transfers the heme to apo-cytochromes in a process facilitated by CcmF and CcmH. This Anaplasma marginale (strain St. Maries) protein is Cytochrome c-type biogenesis protein CcmE.